The sequence spans 292 residues: 33 kDa chaperonin (292 aa).

2 cysteine pairs are disulfide-bonded: cysteine 230–cysteine 232 and cysteine 263–cysteine 266.

It belongs to the HSP33 family. Under oxidizing conditions two disulfide bonds are formed involving the reactive cysteines. Under reducing conditions zinc is bound to the reactive cysteines and the protein is inactive.

It is found in the cytoplasm. In terms of biological role, redox regulated molecular chaperone. Protects both thermally unfolding and oxidatively damaged proteins from irreversible aggregation. Plays an important role in the bacterial defense system toward oxidative stress. This chain is 33 kDa chaperonin, found in Sodalis glossinidius (strain morsitans).